The following is a 242-amino-acid chain: Flavin prenyltransferase PAD1, mitochondrial (242 aa).

The N-terminal 58 residues, 1 to 58 (MLLFPRRTNIAFFKTTGIFANFPLLGRTITTSPSFLTHKLSKEVTRASTSPPRPKRIV), are a transit peptide targeting the mitochondrion. FMN-binding positions include 63-65 (GAT), S89, 140-143 (SMKS), and R175. Dimethylallyl phosphate contacts are provided by Y205 and R221.

Belongs to the UbiX/PAD1 family. As to quaternary structure, oligomer.

The protein resides in the mitochondrion. The enzyme catalyses dimethylallyl phosphate + FMNH2 = prenylated FMNH2 + phosphate. Flavin prenyltransferase that catalyzes the synthesis of the prenylated FMN cofactor (prenyl-FMN) for the ferulic acid decarboxylase FDC1/ubiD. The prenyltransferase is metal-independent and links a dimethylallyl moiety from dimethylallyl monophosphate (DMAP) to the flavin N5 and C6 atoms of FMN. Involved in the decarboxylation of phenylacrylic acids like ferulic acid, p-coumaric acid or cinnamic acid, producing the corresponding vinyl derivatives which play the role of aroma metabolites. Also involved in the degradation of the food preservative sorbic acid (2,4-hexadienoic acid) to a volatile hydrocarbon, 1,3-pentadiene. Not essential for ubiquinone synthesis. Can rescue Q biosynthesis in E.coli strains lacking UbiX. Has mRNA binding activity. This Saccharomyces cerevisiae (strain ATCC 204508 / S288c) (Baker's yeast) protein is Flavin prenyltransferase PAD1, mitochondrial.